The primary structure comprises 235 residues: Photosystem I assembly protein Ycf4 (235 aa).

2 consecutive transmembrane segments (helical) span residues 21–43 (NLCWACILFLGSLGFLLVGTSSY) and 63–85 (GIVMSFYGIAGLFISSYLWCTIL).

It belongs to the Ycf4 family.

The protein localises to the plastid. It localises to the chloroplast thylakoid membrane. Seems to be required for the assembly of the photosystem I complex. The sequence is that of Photosystem I assembly protein Ycf4 from Amborella trichopoda.